The sequence spans 468 residues: UDP-N-acetylmuramoyl-L-alanine--L-glutamate ligase (468 aa).

ATP is bound at residue 122-128; it reads GTKGKST.

It belongs to the MurCDEF family. MurD2 subfamily.

The protein localises to the cytoplasm. It catalyses the reaction UDP-N-acetyl-alpha-D-muramoyl-L-alanine + L-glutamate + ATP = UDP-N-acetyl-alpha-D-muramoyl-L-alanyl-L-glutamate + ADP + phosphate + H(+). Its pathway is cell wall biogenesis; peptidoglycan biosynthesis. Its function is as follows. Cell wall formation. Catalyzes the addition of L-glutamate to the nucleotide precursor UDP-N-acetylmuramoyl-L-alanine. The polypeptide is UDP-N-acetylmuramoyl-L-alanine--L-glutamate ligase (Xylella fastidiosa (strain Temecula1 / ATCC 700964)).